The sequence spans 289 residues: Urease accessory protein UreD (289 aa).

Belongs to the UreD family. In terms of assembly, ureD, UreF and UreG form a complex that acts as a GTP-hydrolysis-dependent molecular chaperone, activating the urease apoprotein by helping to assemble the nickel containing metallocenter of UreC. The UreE protein probably delivers the nickel.

Its subcellular location is the cytoplasm. Required for maturation of urease via the functional incorporation of the urease nickel metallocenter. The chain is Urease accessory protein UreD from Cupriavidus necator (strain ATCC 17699 / DSM 428 / KCTC 22496 / NCIMB 10442 / H16 / Stanier 337) (Ralstonia eutropha).